Reading from the N-terminus, the 387-residue chain is Small ribosomal subunit protein uS5m (387 aa).

Residues 1–22 (MLRSFSHFLQIGSRRQPTYFRC) constitute a mitochondrion transit peptide. The disordered stretch occupies residues 33 to 87 (FKNDPKKELNSNLNEKSVEESSKNETKEQFNSSSIPRESESEGKTASNTSPLSPK). Basic and acidic residues predominate over residues 48–60 (KSVEESSKNETKE). At Ser85 the chain carries Phosphoserine. The S5 DRBM domain maps to 225-288 (LMFVPLVRRR…GRAVKNMVYI (64 aa)).

This sequence belongs to the universal ribosomal protein uS5 family. Component of the mitochondrial small ribosomal subunit (mt-SSU). Mature yeast 74S mitochondrial ribosomes consist of a small (37S) and a large (54S) subunit. The 37S small subunit contains a 15S ribosomal RNA (15S mt-rRNA) and at least 32 different proteins. The 54S large subunit contains a 21S rRNA (21S mt-rRNA) and at least 45 different proteins. uS3m, uS4m and uS5m form the narrow entry site of the mRNA channel.

The protein localises to the mitochondrion. Component of the mitochondrial ribosome (mitoribosome), a dedicated translation machinery responsible for the synthesis of mitochondrial genome-encoded proteins, including at least some of the essential transmembrane subunits of the mitochondrial respiratory chain. The mitoribosomes are attached to the mitochondrial inner membrane and translation products are cotranslationally integrated into the membrane. The polypeptide is Small ribosomal subunit protein uS5m (mrp5) (Schizosaccharomyces pombe (strain 972 / ATCC 24843) (Fission yeast)).